Consider the following 32-residue polypeptide: Ribulose bisphosphate carboxylase/oxygenase activase, chloroplastic (32 aa).

A disordered region spans residues 13–32 (FGALREGPPTFEQPAMTIEK).

It belongs to the RuBisCO activase family.

Its subcellular location is the plastid. The protein localises to the chloroplast stroma. In terms of biological role, activation of RuBisCO (ribulose-1,5-bisphosphate carboxylase/oxygenase; EC 4.1.1.39) involves the ATP-dependent carboxylation of the epsilon-amino group of lysine leading to a carbamate structure. This is Ribulose bisphosphate carboxylase/oxygenase activase, chloroplastic from Populus euphratica (Euphrates poplar).